The chain runs to 1849 residues: SH3 and multiple ankyrin repeat domains protein 2 (1849 aa).

The disordered stretch occupies residues 1 to 33; it reads MPRSPTSSEDEMAQSFSDYSVGSESDSSKEETI. Positions 15-25 are enriched in low complexity; the sequence is SFSDYSVGSES. ANK repeat units follow at residues 196–226, 230–259, 263–293, 297–326, 330–359, and 363–393; these read TGETPLTLAAQLDDSVEVIKALKNGGAHLDF, DGMTALHKAARARNQVALKTLLELGASPDY, YGLTPLYHTAIVGGDPYCCELLLHEHATVCC, NGWHEIHQACRYGHVQHLEHLLFYGADMSA, SGNTALHICALYNQDSCARVLLFRGGNKEL, and NSQTPFQVAIIAGNFELAEYIKNHKETDIVP. Positions 451-493 are disordered; that stretch reads QQMPSKPEGAAKTIGSYVPGPRSRSPSLNRLGGAGEDGKRPQP. The region spanning 526–585 is the SH3 domain; it reads VPGRLFVAVKPYQPQVDGEIPLHRGDRVKVLSIGEGGFWEGSARGHIGWFPAECVEEVQC. One can recognise a PDZ domain in the interval 626 to 720; that stretch reads TVVLQKKDNE…HLVLKVVTVT (95 aa). A compositionally biased stretch (basic and acidic residues) spans 764–774; it reads SVRKKKDKPEE. The tract at residues 764–808 is disordered; that stretch reads SVRKKKDKPEEIVPASKPSRAAENMAVEPRVATIKQRPSSRCFPA. Residue Ser831 is modified to Phosphoserine. At Thr860 the chain carries Phosphothreonine. The tract at residues 878 to 910 is disordered; it reads LSMPDTSEDIPPPPQSVPPSPPPPSPTTYNCPK. The span at 887–903 shows a compositional bias: pro residues; it reads IPPPPQSVPPSPPPPSP. Ser960 is modified (phosphoserine). Disordered regions lie at residues 1013–1293, 1328–1371, 1432–1526, and 1574–1594; these read LVKQ…RKGD, LQEE…TTVP, PALS…GGEN, and SFVIPPPAPPPPPGSAQPGMA. A compositionally biased stretch (low complexity) spans 1040-1052; that stretch reads STSSSGKSSQGSS. Over residues 1086 to 1097 the composition is skewed to basic and acidic residues; that stretch reads VRDREKRLEARR. Ser1099 carries the phosphoserine modification. Residues 1128–1138 show a composition bias toward acidic residues; the sequence is EEGDFADEDSA. 3 stretches are compositionally biased toward low complexity: residues 1159-1170, 1181-1199, and 1208-1221; these read GGAEASAPGEAG, GPESSPAVPSASSGTAGPG, and RLLDPSSPLALALS. Basic and acidic residues predominate over residues 1274 to 1293; it reads RRQETENKYETDLGRDRKGD. Phosphothreonine is present on Thr1278. Residues 1327-1333 carry the SH3-binding motif; it reads ALQEEDE. Positions 1343 to 1357 are enriched in low complexity; it reads SSPSEVPEGVSETEG. Positions 1445 to 1460 are enriched in polar residues; the sequence is TPQSPSLNSSQPTNSA. Over residues 1494-1505 the composition is skewed to basic and acidic residues; sequence VDSRSSSDHHLE. Over residues 1506 to 1522 the composition is skewed to low complexity; the sequence is TTSTISTVSSISTLSSE. Residues 1577–1588 are compositionally biased toward pro residues; sequence IPPPAPPPPPGS. Thr1667 is a glycosylation site (O-linked (GlcNAc) threonine). The segment covering 1678 to 1692 has biased composition (polar residues); sequence FTVRPGTSQPITLQS. Residues 1678 to 1776 form a disordered region; it reads FTVRPGTSQP…SILQQPISNK (99 aa). A phosphoserine mark is found at Ser1709 and Ser1713. 2 stretches are compositionally biased toward low complexity: residues 1721-1738 and 1760-1774; these read TLPAPLSAATASPSPALS and RSRSPSPSILQQPIS. The region spanning 1786 to 1849 is the SAM domain; it reads WTKPDVADWL…ERALKQLLDR (64 aa).

The protein belongs to the SHANK family. Is part of a complex with DLG4/PSD-95 and DLGAP1/GKAP. Interacts with CTTN/cortactin SH3 domain, DLGAP1/GKAP and alpha-latrotoxin receptor 1. Interacts with DNM2, DBNL, GRID2, BAIAP2, SLC9A3, PLCB3 and CFTR. Interacts (via proline-rich region) with PDE4D. Interacts with ABI1 (via SH3 domain). As to expression, isoform 3 is present in epithelial colonic cells (at protein level).

Its subcellular location is the apical cell membrane. The protein localises to the cytoplasm. The protein resides in the synapse. It is found in the postsynaptic density. It localises to the cell projection. Its subcellular location is the growth cone. The protein localises to the dendritic spine. Seems to be an adapter protein in the postsynaptic density (PSD) of excitatory synapses that interconnects receptors of the postsynaptic membrane including NMDA-type and metabotropic glutamate receptors, and the actin-based cytoskeleton. May play a role in the structural and functional organization of the dendritic spine and synaptic junction. This is SH3 and multiple ankyrin repeat domains protein 2 (SHANK2) from Homo sapiens (Human).